The chain runs to 308 residues: uncharacterized protein (308 aa).

Residues 1 to 60 (MNYSLKQLKVFVTVAQEKSFSRAGERIGLSQSAVSHSVKELENHTGVRLLDRTTREVVLT) enclose the HTH lysR-type domain. Positions 20–39 (FSRAGERIGLSQSAVSHSVK) form a DNA-binding region, H-T-H motif.

It belongs to the LysR transcriptional regulatory family.

This is an uncharacterized protein from Shigella flexneri.